A 182-amino-acid polypeptide reads, in one-letter code: Flavodoxin (182 aa).

One can recognise a Flavodoxin-like domain in the interval 4–173 (IGLFFGSDTG…RLKGWLSLIA (170 aa)).

The protein belongs to the flavodoxin family. Requires FMN as cofactor.

Its function is as follows. Low-potential electron donor to a number of redox enzymes. NifF is the electron donor to nitrogenase. The polypeptide is Flavodoxin (nifF) (Rhodobacter capsulatus (strain ATCC BAA-309 / NBRC 16581 / SB1003)).